The sequence spans 244 residues: Probable metallo-hydrolase YhfI (244 aa).

7 residues coordinate Zn(2+): H59, H61, D63, H64, H134, D155, and H211.

This sequence belongs to the metallo-beta-lactamase superfamily. It depends on Zn(2+) as a cofactor.

This is Probable metallo-hydrolase YhfI (yhfI) from Bacillus subtilis (strain 168).